The primary structure comprises 220 residues: MNYAKFIDHTLLKPESTRQQIDQIIDEAKEYNFKSICVNPTHVKYAAERLNDSGVLVCTVIGFPLGATTTATKIFETEDAIKNGATEIDMVINIGALKDGRFEDVQKDIEGVVGAANGKTVKVIIETVLLSDEEKVKASELAKAAGADFVKTSTGFAGGGATPEDVKLMKDTVGDELEVKASGGVRSLEDFNKMIDAGATRIGASAGVQIIQGLESDSDY.

Asp-89 serves as the catalytic Proton donor/acceptor. Lys-151 (schiff-base intermediate with acetaldehyde) is an active-site residue. Catalysis depends on Lys-180, which acts as the Proton donor/acceptor.

It belongs to the DeoC/FbaB aldolase family. DeoC type 1 subfamily.

It localises to the cytoplasm. The enzyme catalyses 2-deoxy-D-ribose 5-phosphate = D-glyceraldehyde 3-phosphate + acetaldehyde. It participates in carbohydrate degradation; 2-deoxy-D-ribose 1-phosphate degradation; D-glyceraldehyde 3-phosphate and acetaldehyde from 2-deoxy-alpha-D-ribose 1-phosphate: step 2/2. Catalyzes a reversible aldol reaction between acetaldehyde and D-glyceraldehyde 3-phosphate to generate 2-deoxy-D-ribose 5-phosphate. The chain is Deoxyribose-phosphate aldolase from Staphylococcus haemolyticus (strain JCSC1435).